A 231-amino-acid polypeptide reads, in one-letter code: Ribonuclease HI (231 aa).

Residues 1–146 (MRERAVAACD…ADRAASQAAV (146 aa)) form the RNase H type-1 domain. The Mg(2+) site is built by D10, E50, D72, and D138. Low complexity-rich tracts occupy residues 148-157 (QEAAGSALGS) and 166-181 (VPAA…SGAA). Disordered stretches follow at residues 148–192 (QEAA…SART) and 212–231 (PIAK…VAAG).

The protein belongs to the RNase H family. In terms of assembly, monomer. The cofactor is Mg(2+).

The protein resides in the cytoplasm. The catalysed reaction is Endonucleolytic cleavage to 5'-phosphomonoester.. Functionally, endonuclease that specifically degrades the RNA of RNA-DNA hybrids. This Streptomyces coelicolor (strain ATCC BAA-471 / A3(2) / M145) protein is Ribonuclease HI (rnhA).